A 486-amino-acid polypeptide reads, in one-letter code: NADH-quinone oxidoreductase subunit N (486 aa).

Transmembrane regions (helical) follow at residues 8–28 (FIALLPLLITSATLVVVMLAV), 38–58 (ATLSVIGLNLALLSLLPVLGV), 73–93 (ACFYMALVLVSALACVTLAHA), 105–125 (LYLLLLLATAGGLVLVSAQHL), 128–148 (LFIGLELLSVPVYGMVAYAFF), 169–189 (FLLFGMALLYAESGTLGFAGL), 196–216 (HVLSGPLVSVGVGMMLVGLGF), 235–255 (PAPVSAFLATASKVAVFAVLL), 269–289 (LLNISLSVIAVASILFGNLLA), 304–324 (IAHLGYLLVALIASKGMAVEA), 325–345 (VGVYLATYVLTSLGAFGVITL), 373–393 (AVMTVMMLSLAGIPLTAGFIG), 405–427 (HLWWLIGALVLGSAIGLYYYLRV), and 454–474 (IMLVAIALLAFFLGVYPQPLL).

This sequence belongs to the complex I subunit 2 family. NDH-1 is composed of 13 different subunits. Subunits NuoA, H, J, K, L, M, N constitute the membrane sector of the complex.

It localises to the cell inner membrane. The catalysed reaction is a quinone + NADH + 5 H(+)(in) = a quinol + NAD(+) + 4 H(+)(out). NDH-1 shuttles electrons from NADH, via FMN and iron-sulfur (Fe-S) centers, to quinones in the respiratory chain. The immediate electron acceptor for the enzyme in this species is believed to be ubiquinone. Couples the redox reaction to proton translocation (for every two electrons transferred, four hydrogen ions are translocated across the cytoplasmic membrane), and thus conserves the redox energy in a proton gradient. This Pseudomonas aeruginosa (strain ATCC 15692 / DSM 22644 / CIP 104116 / JCM 14847 / LMG 12228 / 1C / PRS 101 / PAO1) protein is NADH-quinone oxidoreductase subunit N.